We begin with the raw amino-acid sequence, 257 residues long: Large ribosomal subunit protein uL2 (257 aa).

Residues 207–257 (VDHPHGGGNHQHVGHPTTLKRSSPPGQKAGKVAARRTGLIRGGNKEGAADN) form a disordered region.

Belongs to the universal ribosomal protein uL2 family. Component of the large ribosomal subunit.

The protein resides in the cytoplasm. Functionally, component of the large ribosomal subunit. The ribosome is a large ribonucleoprotein complex responsible for the synthesis of proteins in the cell. The sequence is that of Large ribosomal subunit protein uL2 (RPL8) from Entamoeba histolytica (strain ATCC 30459 / HM-1:IMSS / ABRM).